The sequence spans 238 residues: MAGGLPHPVLLVDEAAKSVGLYKLNDVFHAQVIDSNVIYAWFAMVLLIILGTLATRKLAMVPSGLQNFFEVVVGGLESFVVENIGEKGRKVYPFLCALFLFIITGNLIGLVPGLDSPTNNVNTNAAMALTVFAYYNFWGIRMWGAGYIKHFMGPFWWLVPLMLPIEIISHLARPLSLTLRLFGNIRGEEIVLVLLFALAPVVGTFPMYFLFSLADCIQAFVFFMLAMIYLKGSLDHAH.

7 helical membrane passes run 35 to 55, 61 to 81, 94 to 114, 128 to 148, 151 to 171, 190 to 210, and 211 to 231; these read SNVI…TLAT, VPSG…SFVV, FLCA…VPGL, ALTV…AGYI, FMGP…ISHL, IVLV…MYFL, and FSLA…IYLK.

It belongs to the ATPase A chain family. F-type ATPases have 2 components, CF(1) - the catalytic core - and CF(0) - the membrane proton channel. CF(1) has five subunits: alpha(3), beta(3), gamma(1), delta(1), epsilon(1). CF(0) has three main subunits: a(1), b(2) and c(9-12). The alpha and beta chains form an alternating ring which encloses part of the gamma chain. CF(1) is attached to CF(0) by a central stalk formed by the gamma and epsilon chains, while a peripheral stalk is formed by the delta and b chains.

It is found in the cell inner membrane. Key component of the proton channel; it plays a direct role in the translocation of protons across the membrane. In Solidesulfovibrio magneticus (strain ATCC 700980 / DSM 13731 / RS-1) (Desulfovibrio magneticus), this protein is ATP synthase subunit a.